A 35-amino-acid polypeptide reads, in one-letter code: Photosystem II reaction center protein Psb30 (35 aa).

The helical transmembrane segment at 6 to 26 (VIVQLVFLALIITTGPVIIVY) threads the bilayer.

Belongs to the Psb30/Ycf12 family. PSII is composed of 1 copy each of membrane proteins PsbA, PsbB, PsbC, PsbD, PsbE, PsbF, PsbH, PsbI, PsbJ, PsbK, PsbL, PsbM, PsbT, PsbY, PsbZ, Psb30/Ycf12, peripheral proteins of the oxygen-evolving complex and a large number of cofactors. It forms dimeric complexes.

It localises to the plastid. It is found in the chloroplast thylakoid membrane. In terms of biological role, a core subunit of photosystem II (PSII), probably helps stabilize the reaction center. In Cyanidium caldarium (Red alga), this protein is Photosystem II reaction center protein Psb30.